The primary structure comprises 602 residues: Elongation factor 4 (602 aa).

The tr-type G domain occupies 8-190 (DLIRNFSIVA…AIVHRLPPPK (183 aa)). GTP-binding positions include 20–25 (DHGKST) and 137–140 (NKID).

The protein belongs to the TRAFAC class translation factor GTPase superfamily. Classic translation factor GTPase family. LepA subfamily.

It is found in the cell inner membrane. It catalyses the reaction GTP + H2O = GDP + phosphate + H(+). In terms of biological role, required for accurate and efficient protein synthesis under certain stress conditions. May act as a fidelity factor of the translation reaction, by catalyzing a one-codon backward translocation of tRNAs on improperly translocated ribosomes. Back-translocation proceeds from a post-translocation (POST) complex to a pre-translocation (PRE) complex, thus giving elongation factor G a second chance to translocate the tRNAs correctly. Binds to ribosomes in a GTP-dependent manner. This chain is Elongation factor 4, found in Cereibacter sphaeroides (strain KD131 / KCTC 12085) (Rhodobacter sphaeroides).